The primary structure comprises 266 residues: Protein STAY-GREEN homolog, chloroplastic (266 aa).

A chloroplast-targeting transit peptide spans 1 to 50 (MGTLTASLVAPSKLNPEKHSSLFVYKTRRKSHKNQSIVPVARLFGPAIFE).

This sequence belongs to the staygreen family.

The protein localises to the plastid. It is found in the chloroplast. In terms of biological role, required to trigger chlorophyll degradation during leaf senescence and fruit ripening. The polypeptide is Protein STAY-GREEN homolog, chloroplastic (Capsicum annuum (Capsicum pepper)).